Reading from the N-terminus, the 305-residue chain is N-acetylmuramic acid 6-phosphate etherase (305 aa).

The SIS domain occupies 59–222 (TSKALGKGGR…STGVMVKLGK (164 aa)). Residue Glu87 is the Proton donor of the active site. Glu118 is an active-site residue.

It belongs to the GCKR-like family. MurNAc-6-P etherase subfamily. Homodimer.

The catalysed reaction is N-acetyl-D-muramate 6-phosphate + H2O = N-acetyl-D-glucosamine 6-phosphate + (R)-lactate. The protein operates within amino-sugar metabolism; N-acetylmuramate degradation. In terms of biological role, specifically catalyzes the cleavage of the D-lactyl ether substituent of MurNAc 6-phosphate, producing GlcNAc 6-phosphate and D-lactate. The chain is N-acetylmuramic acid 6-phosphate etherase from Crocosphaera subtropica (strain ATCC 51142 / BH68) (Cyanothece sp. (strain ATCC 51142)).